A 208-amino-acid chain; its full sequence is Putative dioxygenase RBE_0329 (208 aa).

It belongs to the intradiol ring-cleavage dioxygenase family.

The protein is Putative dioxygenase RBE_0329 of Rickettsia bellii (strain RML369-C).